We begin with the raw amino-acid sequence, 396 residues long: Acetate kinase (396 aa).

Asn8 lines the Mg(2+) pocket. Lys15 is an ATP binding site. Arg89 serves as a coordination point for substrate. The Proton donor/acceptor role is filled by Asp146. ATP contacts are provided by residues 206-210 (HIGNG), 283-285 (DMR), and 331-335 (GVGEN). Residue Glu383 participates in Mg(2+) binding.

Belongs to the acetokinase family. In terms of assembly, homodimer. It depends on Mg(2+) as a cofactor. Mn(2+) serves as cofactor.

It is found in the cytoplasm. It catalyses the reaction acetate + ATP = acetyl phosphate + ADP. It functions in the pathway metabolic intermediate biosynthesis; acetyl-CoA biosynthesis; acetyl-CoA from acetate: step 1/2. In terms of biological role, catalyzes the formation of acetyl phosphate from acetate and ATP. Can also catalyze the reverse reaction. The polypeptide is Acetate kinase (Streptococcus pneumoniae (strain JJA)).